The sequence spans 437 residues: mRNA cleavage and polyadenylation factor CLP1 (437 aa).

ATP contacts are provided by residues glutamate 23 and 122 to 127 (STGKSS).

Belongs to the Clp1 family. Clp1 subfamily. Component of a pre-mRNA cleavage factor complex. Interacts directly with PCF11.

The protein localises to the nucleus. Its function is as follows. Required for endonucleolytic cleavage during polyadenylation-dependent pre-mRNA 3'-end formation. The chain is mRNA cleavage and polyadenylation factor CLP1 from Kluyveromyces lactis (strain ATCC 8585 / CBS 2359 / DSM 70799 / NBRC 1267 / NRRL Y-1140 / WM37) (Yeast).